A 282-amino-acid chain; its full sequence is NAD(P)H-hydrate epimerase (282 aa).

Residues 1 to 53 (MSGLRTLLGLGLLVAGSRLPRVISQQSVCRARPIWWGTQRRGSETMAGAAVKY) constitute a mitochondrion transit peptide. Phosphoserine; by PKA is present on Ser43. Residues 59 to 269 (AQAVDQELFN…ALEKKYQLNL (211 aa)) enclose the YjeF N-terminal domain. Residue 113–117 (NNGGD) participates in (6S)-NADPHX binding. Asn114 is a K(+) binding site. Lys138 carries the post-translational modification N6-succinyllysine. Asp179 is a K(+) binding site. (6S)-NADPHX-binding positions include 183 to 189 (GFSFKGD) and Asp212. Ser215 lines the K(+) pocket.

The protein belongs to the NnrE/AIBP family. As to quaternary structure, homodimer. Interacts with APOA1 and APOA2. It depends on K(+) as a cofactor. Undergoes physiological phosphorylation during sperm capacitation, downstream to PKA activation. As to expression, detected in testis and sperm (at protein level). Expressed at high levels in heart, liver, kidney, and testis.

It is found in the mitochondrion. The protein resides in the secreted. It catalyses the reaction (6R)-NADHX = (6S)-NADHX. It carries out the reaction (6R)-NADPHX = (6S)-NADPHX. Its function is as follows. Catalyzes the epimerization of the S- and R-forms of NAD(P)HX, a damaged form of NAD(P)H that is a result of enzymatic or heat-dependent hydration. This is a prerequisite for the S-specific NAD(P)H-hydrate dehydratase to allow the repair of both epimers of NAD(P)HX. Accelerates cholesterol efflux from endothelial cells to high-density lipoprotein (HDL) and thereby regulates angiogenesis. The protein is NAD(P)H-hydrate epimerase of Mus musculus (Mouse).